The sequence spans 115 residues: Nitrogenase-stabilizing/protective protein NifW (115 aa).

This sequence belongs to the NifW family. As to quaternary structure, homotrimer; associates with NifD.

May protect the nitrogenase Fe-Mo protein from oxidative damage. This Azotobacter vinelandii (strain DJ / ATCC BAA-1303) protein is Nitrogenase-stabilizing/protective protein NifW.